Reading from the N-terminus, the 147-residue chain is D-aminoacyl-tRNA deacylase (147 aa).

Residues 136–137 carry the Gly-cisPro motif, important for rejection of L-amino acids motif; sequence GP.

This sequence belongs to the DTD family. Homodimer.

Its subcellular location is the cytoplasm. The catalysed reaction is glycyl-tRNA(Ala) + H2O = tRNA(Ala) + glycine + H(+). The enzyme catalyses a D-aminoacyl-tRNA + H2O = a tRNA + a D-alpha-amino acid + H(+). Functionally, an aminoacyl-tRNA editing enzyme that deacylates mischarged D-aminoacyl-tRNAs. Also deacylates mischarged glycyl-tRNA(Ala), protecting cells against glycine mischarging by AlaRS. Acts via tRNA-based rather than protein-based catalysis; rejects L-amino acids rather than detecting D-amino acids in the active site. By recycling D-aminoacyl-tRNA to D-amino acids and free tRNA molecules, this enzyme counteracts the toxicity associated with the formation of D-aminoacyl-tRNA entities in vivo and helps enforce protein L-homochirality. This Streptococcus dysgalactiae subsp. equisimilis (Streptococcus equisimilis) protein is D-aminoacyl-tRNA deacylase.